The following is a 251-amino-acid chain: 3-deoxy-manno-octulosonate cytidylyltransferase (251 aa).

Belongs to the KdsB family.

It is found in the cytoplasm. It carries out the reaction 3-deoxy-alpha-D-manno-oct-2-ulosonate + CTP = CMP-3-deoxy-beta-D-manno-octulosonate + diphosphate. The protein operates within nucleotide-sugar biosynthesis; CMP-3-deoxy-D-manno-octulosonate biosynthesis; CMP-3-deoxy-D-manno-octulosonate from 3-deoxy-D-manno-octulosonate and CTP: step 1/1. Its pathway is bacterial outer membrane biogenesis; lipopolysaccharide biosynthesis. Activates KDO (a required 8-carbon sugar) for incorporation into bacterial lipopolysaccharide in Gram-negative bacteria. The polypeptide is 3-deoxy-manno-octulosonate cytidylyltransferase (Rhizobium leguminosarum bv. trifolii (strain WSM2304)).